We begin with the raw amino-acid sequence, 152 residues long: Ubiquitin-conjugating enzyme E2 N (152 aa).

Residues 3-149 (GLPRRIIKET…ARAWTRLYAM (147 aa)) enclose the UBC core domain. Lysine 82 carries the N6-acetyllysine modification. Cysteine 87 serves as the catalytic Glycyl thioester intermediate. Residue lysine 92 forms a Glycyl lysine isopeptide (Lys-Gly) (interchain with G-Cter in ISG15) linkage.

Belongs to the ubiquitin-conjugating enzyme family. In terms of assembly, heterodimer with UBE2V2. Interacts (UBE2V2-UBE2N heterodimer) with the E3 ligase STUB1 (via the U-box domain); the complex has a specific 'Lys-63'-linked polyubiquitination activity. Interacts with RNF8 and RNF168. Interacts with RNF11. Interacts with the E3 ligases, HLTF and SHPRH; the interactions promote the 'Lys-63'-linked polyubiquitination of PCNA upon genotoxic stress and lead to DNA repair. Interacts with ARIH2 (via RING-type 2). Interacts with OTUB1; leading to inhibit E2-conjugating activity. Interacts with GPS2; leading to inhibit E2-conjugating activity. Interacts with RIGI and RNF135; involved in RIGI ubiquitination and activation. Conjugation to ISG15 impairs formation of the thioester bond with ubiquitin but not interaction with UBE2V2.

It catalyses the reaction S-ubiquitinyl-[E1 ubiquitin-activating enzyme]-L-cysteine + [E2 ubiquitin-conjugating enzyme]-L-cysteine = [E1 ubiquitin-activating enzyme]-L-cysteine + S-ubiquitinyl-[E2 ubiquitin-conjugating enzyme]-L-cysteine.. It participates in protein modification; protein ubiquitination. Activity is inhibited by binding to OTUB1, which prevents 'Lys-63'-linked polyubiquitination. Activity is inhibited by GPS2, leading to prevent 'Lys-63'-linked polyubiquitination. Its function is as follows. The UBE2V1-UBE2N and UBE2V2-UBE2N heterodimers catalyze the synthesis of non-canonical 'Lys-63'-linked polyubiquitin chains. This type of polyubiquitination does not lead to protein degradation by the proteasome. Mediates transcriptional activation of target genes. Plays a role in the control of progress through the cell cycle and differentiation. Plays a role in the error-free DNA repair pathway and contributes to the survival of cells after DNA damage. Acts together with the E3 ligases, HLTF and SHPRH, in the 'Lys-63'-linked poly-ubiquitination of PCNA upon genotoxic stress, which is required for DNA repair. Appears to act together with E3 ligase RNF5 in the 'Lys-63'-linked polyubiquitination of JKAMP thereby regulating JKAMP function by decreasing its association with components of the proteasome and ERAD. Promotes TRIM5 capsid-specific restriction activity and the UBE2V1-UBE2N heterodimer acts in concert with TRIM5 to generate 'Lys-63'-linked polyubiquitin chains which activate the MAP3K7/TAK1 complex which in turn results in the induction and expression of NF-kappa-B and MAPK-responsive inflammatory genes. Together with RNF135 and UB2V1, catalyzes the viral RNA-dependent 'Lys-63'-linked polyubiquitination of RIGI to activate the downstream signaling pathway that leads to interferon beta production. UBE2V1-UBE2N together with TRAF3IP2 E3 ubiquitin ligase mediate 'Lys-63'-linked polyubiquitination of TRAF6, a component of IL17A-mediated signaling pathway. In Bos taurus (Bovine), this protein is Ubiquitin-conjugating enzyme E2 N (UBE2N).